The following is a 380-amino-acid chain: Palmitoyltransferase ZDHHC20 (380 aa).

Topologically, residues 1 to 14 are cytoplasmic; it reads MAPWTLWRCCQRVV. The helical transmembrane segment at 15–35 threads the bilayer; it reads GWVPVLFITFVVVWSYYAYVV. Topologically, residues 36-53 are lumenal; that stretch reads ELCVSTISRTGEKGKTVV. Residues 54–74 form a helical membrane-spanning segment; it reads YLVAFHLFFVMFVWSYWMTIF. Residues 75 to 169 lie on the Cytoplasmic side of the membrane; sequence TSPASPSKEF…NNCVGFTNYK (95 aa). The DHHC domain maps to 126–176; it reads RYCEKCQLIKPDRAHHCSACDRCVLKMDHHCPWVNNCVGFTNYKFFMLFLL. Residues Cys-128 and Cys-131 each coordinate Zn(2+). Substrate-binding positions include Lys-135 and 140–143; that span reads HHCS. Zn(2+) contacts are provided by His-141, Cys-142, Cys-145, Cys-148, and His-155. Catalysis depends on Cys-156, which acts as the S-palmitoyl cysteine intermediate. Residue Cys-162 coordinates Zn(2+). Residues 170-190 traverse the membrane as a helical segment; it reads FFMLFLLYSLLYCLFVAATVL. The Lumenal portion of the chain corresponds to 191 to 222; sequence EYFIKFWTLCRRKSTENCPKNEPTVLNFPSAK. Residues 223–246 traverse the membrane as a helical segment; it reads FHVLFLFFVSAMFFVSVLSLFSYH. Residues 247–380 are Cytoplasmic-facing; the sequence is CWLVGKNRTT…NNHVTVEIEN (134 aa). Phosphoserine occurs at positions 320, 345, and 354.

This sequence belongs to the DHHC palmitoyltransferase family. In terms of processing, autopalmitoylated (in vitro). Highest levels in lung.

The protein localises to the golgi apparatus membrane. It is found in the cell membrane. The protein resides in the cytoplasm. It localises to the perinuclear region. Its subcellular location is the endoplasmic reticulum membrane. The protein localises to the endoplasmic reticulum-Golgi intermediate compartment membrane. It catalyses the reaction L-cysteinyl-[protein] + hexadecanoyl-CoA = S-hexadecanoyl-L-cysteinyl-[protein] + CoA. The catalysed reaction is L-cysteinyl-[protein] + tetradecanoyl-CoA = S-tetradecanoyl-L-cysteinyl-[protein] + CoA. It carries out the reaction L-cysteinyl-[protein] + octadecanoyl-CoA = S-octadecanoyl-L-cysteinyl-[protein] + CoA. Its function is as follows. Palmitoyltransferase that could catalyze the addition of palmitate onto various protein substrates. Catalyzes palmitoylation of Cys residues in the cytoplasmic C-terminus of EGFR, and modulates the duration of EGFR signaling by modulating palmitoylation-dependent EGFR internalization and degradation. Has a preference for acyl-CoA with C16 fatty acid chains. Can also utilize acyl-CoA with C14 and C18 fatty acid chains. May palmitoylate CALHM1 subunit of gustatory voltage-gated ion channels and modulate channel gating and kinetics. This Mus musculus (Mouse) protein is Palmitoyltransferase ZDHHC20.